Here is a 262-residue protein sequence, read N- to C-terminus: ATP synthase subunit a (262 aa).

A run of 5 helical transmembrane segments spans residues 26-46 (VHID…FVFS), 86-106 (VAPL…IDLI), 130-150 (DISA…FYTI), 204-226 (LIFI…GIPL), and 240-260 (LQAF…YNKA).

This sequence belongs to the ATPase A chain family. As to quaternary structure, F-type ATPases have 2 components, CF(1) - the catalytic core - and CF(0) - the membrane proton channel. CF(1) has five subunits: alpha(3), beta(3), gamma(1), delta(1), epsilon(1). CF(0) has three main subunits: a(1), b(2) and c(9-12). The alpha and beta chains form an alternating ring which encloses part of the gamma chain. CF(1) is attached to CF(0) by a central stalk formed by the gamma and epsilon chains, while a peripheral stalk is formed by the delta and b chains.

Its subcellular location is the cell inner membrane. In terms of biological role, key component of the proton channel; it plays a direct role in the translocation of protons across the membrane. The sequence is that of ATP synthase subunit a from Haemophilus influenzae (strain PittEE).